The primary structure comprises 387 residues: Pepsin A-5 (387 aa).

The N-terminal stretch at 1 to 15 (MKWLWVLGLVALSEC) is a signal peptide. A propeptide spans 16–62 (LVKIPLMKIKSMRENLRESQVLKDYLEKYPRSRAHVLLEQRRNPAVT) (activation peptide). A Peptidase A1 domain is found at 74 to 384 (YIGIISIGTP…DRANNRIGLA (311 aa)). Residue Asp92 is part of the active site. Disulfide bonds link Cys105–Cys110 and Cys266–Cys270. Asp275 is an active-site residue. Cysteines 309 and 343 form a disulfide.

It belongs to the peptidase A1 family. Expressed in glandular chief cells of the neonatal stomach. Expressed in yolk sacs of the placenta (at protein level).

The protein resides in the secreted. It catalyses the reaction Preferential cleavage: hydrophobic, preferably aromatic, residues in P1 and P1' positions. Cleaves 1-Phe-|-Val-2, 4-Gln-|-His-5, 13-Glu-|-Ala-14, 14-Ala-|-Leu-15, 15-Leu-|-Tyr-16, 16-Tyr-|-Leu-17, 23-Gly-|-Phe-24, 24-Phe-|-Phe-25 and 25-Phe-|-Tyr-26 bonds in the B chain of insulin.. With respect to regulation, inhibited by pepstatin A. Its function is as follows. Shows particularly broad specificity; although bonds involving phenylalanine and leucine are preferred, many others are also cleaved to some extent. May play a role as a specialized neonatal digestive enzyme. The sequence is that of Pepsin A-5 from Mus musculus (Mouse).